Consider the following 169-residue polypeptide: Inorganic pyrophosphatase (169 aa).

The substrate site is built by K20, R34, and Y46. Mg(2+)-binding residues include D56, D61, and D93. Y130 serves as a coordination point for substrate.

The protein belongs to the PPase family. As to quaternary structure, homohexamer. It depends on Mg(2+) as a cofactor.

It localises to the cytoplasm. The catalysed reaction is diphosphate + H2O = 2 phosphate + H(+). Functionally, catalyzes the hydrolysis of inorganic pyrophosphate (PPi) forming two phosphate ions. The chain is Inorganic pyrophosphatase from Methanosarcina mazei (strain ATCC BAA-159 / DSM 3647 / Goe1 / Go1 / JCM 11833 / OCM 88) (Methanosarcina frisia).